A 764-amino-acid chain; its full sequence is Sesterfisherol synthase (764 aa).

A terpene cyclase region spans residues 2–331 (EVWEHSRPIA…SPRHHAWRNN (330 aa)). D95 serves as a coordination point for Mg(2+). Substrate is bound by residues D95, 187–190 (RRDD), N231, 235–239 (SFDRE), and 324–325 (RH). Positions 95–99 (DDGYE) match the DDXXD 1 motif. Residues 231–239 (NDYWSFDRE) carry the NSE/DTE motif. Positions 332-759 (SRNGLKPANH…PMLRLLLEKL (428 aa)) are prenyltransferase. The tract at residues 347–372 (LITPSNNLNSSKGSEEQMQDSDNGTR) is disordered. Polar residues predominate over residues 348 to 358 (ITPSNNLNSSK). Residues K476, R479, and H508 each contribute to the isopentenyl diphosphate site. Mg(2+)-binding residues include D515 and D519. Positions 515 to 519 (DDIED) match the DDXXD 2 motif. R524 contributes to the dimethylallyl diphosphate binding site. R525 contributes to the isopentenyl diphosphate binding site. Positions 602, 603, 638, 645, 655, and 665 each coordinate dimethylallyl diphosphate.

It in the N-terminal section; belongs to the terpene synthase family. In the C-terminal section; belongs to the FPP/GGPP synthase family. Hexamer. Mg(2+) is required as a cofactor.

The catalysed reaction is isopentenyl diphosphate + (2E,6E)-farnesyl diphosphate = (2E,6E,10E)-geranylgeranyl diphosphate + diphosphate. It carries out the reaction isopentenyl diphosphate + (2E,6E,10E)-geranylgeranyl diphosphate = (2E,6E,10E,14E)-geranylfarnesyl diphosphate + diphosphate. It catalyses the reaction (2E,6E,10E,14E)-geranylfarnesyl diphosphate + H2O = sesterfisherol + diphosphate. The protein operates within secondary metabolite biosynthesis; terpenoid biosynthesis. Its function is as follows. Bifunctional terpene synthase; part of the gene cluster that mediates the biosynthesis of sesterfisheric acid. The bifunctional terpene synthase NfSS converts dimethylallyl diphosphate (DMAPP) and isopentenyl diphosphate (IPP) into sesterfisherol. The C-terminal prenyltransferase (PT) domain of NfSS catalyzes formation of geranylfarnesyl pyrophosphate (GFPP), whereas the N-terminal terpene cyclase (TC) domain catalyzes the cyclization of GFPP to sesterfisherol. The cytochrome P450 monooxygenase NfP450 then catalyzes oxidative modifications of sesterfisherol into sesterfisheric acid. This Neosartorya fischeri (strain ATCC 1020 / DSM 3700 / CBS 544.65 / FGSC A1164 / JCM 1740 / NRRL 181 / WB 181) (Aspergillus fischerianus) protein is Sesterfisherol synthase.